The primary structure comprises 502 residues: ATP synthase subunit alpha (502 aa).

Residue 169 to 176 participates in ATP binding; that stretch reads GDRQTGKT.

Belongs to the ATPase alpha/beta chains family. As to quaternary structure, F-type ATPases have 2 components, CF(1) - the catalytic core - and CF(0) - the membrane proton channel. CF(1) has five subunits: alpha(3), beta(3), gamma(1), delta(1), epsilon(1). CF(0) has three main subunits: a(1), b(2) and c(9-12). The alpha and beta chains form an alternating ring which encloses part of the gamma chain. CF(1) is attached to CF(0) by a central stalk formed by the gamma and epsilon chains, while a peripheral stalk is formed by the delta and b chains.

It localises to the cell membrane. The enzyme catalyses ATP + H2O + 4 H(+)(in) = ADP + phosphate + 5 H(+)(out). Produces ATP from ADP in the presence of a proton gradient across the membrane. The alpha chain is a regulatory subunit. In Clostridium perfringens (strain SM101 / Type A), this protein is ATP synthase subunit alpha.